The sequence spans 179 residues: Small ribosomal subunit protein uS5 (179 aa).

The region spanning 22–85 is the S5 DRBM domain; it reads MIEKLVAVNR…EYARKRMSNV (64 aa).

The protein belongs to the universal ribosomal protein uS5 family. In terms of assembly, part of the 30S ribosomal subunit. Contacts proteins S4 and S8.

Functionally, with S4 and S12 plays an important role in translational accuracy. Located at the back of the 30S subunit body where it stabilizes the conformation of the head with respect to the body. The polypeptide is Small ribosomal subunit protein uS5 (Xylella fastidiosa (strain M23)).